We begin with the raw amino-acid sequence, 370 residues long: Queuine tRNA-ribosyltransferase (370 aa).

The active-site Proton acceptor is the D89. Substrate is bound by residues 89 to 93 (DSGGF), D143, and G214. Residues 245 to 251 (GVGKPED) are RNA binding. D264 (nucleophile) is an active-site residue. Residues 269-273 (TRNAR) form an RNA binding; important for wobble base 34 recognition region. The Zn(2+) site is built by C302, C304, C307, and H333.

This sequence belongs to the queuine tRNA-ribosyltransferase family. In terms of assembly, homodimer. Within each dimer, one monomer is responsible for RNA recognition and catalysis, while the other monomer binds to the replacement base PreQ1. Zn(2+) serves as cofactor.

It carries out the reaction 7-aminomethyl-7-carbaguanine + guanosine(34) in tRNA = 7-aminomethyl-7-carbaguanosine(34) in tRNA + guanine. It participates in tRNA modification; tRNA-queuosine biosynthesis. Functionally, catalyzes the base-exchange of a guanine (G) residue with the queuine precursor 7-aminomethyl-7-deazaguanine (PreQ1) at position 34 (anticodon wobble position) in tRNAs with GU(N) anticodons (tRNA-Asp, -Asn, -His and -Tyr). Catalysis occurs through a double-displacement mechanism. The nucleophile active site attacks the C1' of nucleotide 34 to detach the guanine base from the RNA, forming a covalent enzyme-RNA intermediate. The proton acceptor active site deprotonates the incoming PreQ1, allowing a nucleophilic attack on the C1' of the ribose to form the product. After dissociation, two additional enzymatic reactions on the tRNA convert PreQ1 to queuine (Q), resulting in the hypermodified nucleoside queuosine (7-(((4,5-cis-dihydroxy-2-cyclopenten-1-yl)amino)methyl)-7-deazaguanosine). The chain is Queuine tRNA-ribosyltransferase from Buchnera aphidicola subsp. Acyrthosiphon pisum (strain APS) (Acyrthosiphon pisum symbiotic bacterium).